A 309-amino-acid polypeptide reads, in one-letter code: tRNA pseudouridine synthase B (309 aa).

The active-site Nucleophile is the Asp45.

The protein belongs to the pseudouridine synthase TruB family. Type 1 subfamily.

It catalyses the reaction uridine(55) in tRNA = pseudouridine(55) in tRNA. Responsible for synthesis of pseudouridine from uracil-55 in the psi GC loop of transfer RNAs. The protein is tRNA pseudouridine synthase B of Oleidesulfovibrio alaskensis (strain ATCC BAA-1058 / DSM 17464 / G20) (Desulfovibrio alaskensis).